The following is a 224-amino-acid chain: Peptidyl-prolyl cis-trans isomerase CYP21-1 (224 aa).

The N-terminal stretch at 1–27 (MRREISFLLQPRCLLLLVALTIFLVFA) is a signal peptide. The PPIase cyclophilin-type domain maps to 50-214 (FLDVDIDGQR…KKVVIADSGE (165 aa)). The N-linked (GlcNAc...) asparagine glycan is linked to Asn158.

It belongs to the cyclophilin-type PPIase family. As to expression, ubiquitous.

The protein resides in the endoplasmic reticulum. It catalyses the reaction [protein]-peptidylproline (omega=180) = [protein]-peptidylproline (omega=0). Functionally, PPIases accelerate the folding of proteins. It catalyzes the cis-trans isomerization of proline imidic peptide bonds in oligopeptides. In Arabidopsis thaliana (Mouse-ear cress), this protein is Peptidyl-prolyl cis-trans isomerase CYP21-1 (CYP21-1).